Consider the following 337-residue polypeptide: Anthranilate phosphoribosyltransferase (337 aa).

5-phospho-alpha-D-ribose 1-diphosphate-binding positions include G81, 84–85 (GD), S89, 91–94 (NVST), 109–117 (KHGNRALSS), and A121. G81 is an anthranilate binding site. Position 93 (S93) interacts with Mg(2+). Residue N112 coordinates anthranilate. Residue R167 participates in anthranilate binding. Residues D226 and E227 each contribute to the Mg(2+) site.

The protein belongs to the anthranilate phosphoribosyltransferase family. In terms of assembly, homodimer. It depends on Mg(2+) as a cofactor.

It carries out the reaction N-(5-phospho-beta-D-ribosyl)anthranilate + diphosphate = 5-phospho-alpha-D-ribose 1-diphosphate + anthranilate. The protein operates within amino-acid biosynthesis; L-tryptophan biosynthesis; L-tryptophan from chorismate: step 2/5. Functionally, catalyzes the transfer of the phosphoribosyl group of 5-phosphorylribose-1-pyrophosphate (PRPP) to anthranilate to yield N-(5'-phosphoribosyl)-anthranilate (PRA). The chain is Anthranilate phosphoribosyltransferase from Bradyrhizobium sp. (strain BTAi1 / ATCC BAA-1182).